Consider the following 333-residue polypeptide: Fructose-1,6-bisphosphatase class 1 (333 aa).

4 residues coordinate Mg(2+): glutamate 92, aspartate 113, leucine 115, and aspartate 116. Residues 116–119 (DGSS), asparagine 209, tyrosine 242, and lysine 272 contribute to the substrate site. Position 278 (glutamate 278) interacts with Mg(2+).

It belongs to the FBPase class 1 family. As to quaternary structure, homotetramer. Mg(2+) serves as cofactor.

It is found in the cytoplasm. The catalysed reaction is beta-D-fructose 1,6-bisphosphate + H2O = beta-D-fructose 6-phosphate + phosphate. The protein operates within carbohydrate biosynthesis; Calvin cycle. The sequence is that of Fructose-1,6-bisphosphatase class 1 from Chlorobaculum parvum (strain DSM 263 / NCIMB 8327) (Chlorobium vibrioforme subsp. thiosulfatophilum).